Consider the following 217-residue polypeptide: Probable GTP-binding protein EngB (217 aa).

Residues 29-213 (GPSEVAFAGR…RQAIAQTVGI (185 aa)) form the EngB-type G domain. GTP contacts are provided by residues 37–44 (GRSNVGKS), 64–68 (GRTQE), 91–94 (DMPG), 158–161 (TKTD), and 192–194 (TSS). Residues serine 44 and threonine 66 each coordinate Mg(2+).

The protein belongs to the TRAFAC class TrmE-Era-EngA-EngB-Septin-like GTPase superfamily. EngB GTPase family. Mg(2+) is required as a cofactor.

Necessary for normal cell division and for the maintenance of normal septation. The chain is Probable GTP-binding protein EngB from Rhizobium etli (strain CIAT 652).